The sequence spans 180 residues: Probable chorismate pyruvate-lyase (180 aa).

Residues R73, L111, and E170 each contribute to the substrate site.

The protein belongs to the UbiC family.

The protein resides in the cytoplasm. The enzyme catalyses chorismate = 4-hydroxybenzoate + pyruvate. The protein operates within cofactor biosynthesis; ubiquinone biosynthesis. In terms of biological role, removes the pyruvyl group from chorismate, with concomitant aromatization of the ring, to provide 4-hydroxybenzoate (4HB) for the ubiquinone pathway. The protein is Probable chorismate pyruvate-lyase of Nitrosospira multiformis (strain ATCC 25196 / NCIMB 11849 / C 71).